Here is a 72-residue protein sequence, read N- to C-terminus: Lantibiotic Flvbeta.e (72 aa).

A propeptide spans 1 to 34 (cleaved by FlvT); the sequence is MNNKEFNMEQFKKLAAVVSEDELDEMLDENVTGA. Positions 36-40 form a cross-link, lanthionine (Ser-Cys); by FlvM2; that stretch reads SSIPC. 2,3-didehydroalanine (Ser); by FlvM2 is present on S37. A 2,3-didehydrobutyrine; by FlvM2 mark is found at T48 and T49. Cross-links (beta-methyllanthionine (Thr-Cys); by FlvM2) lie at residues 55-61, 63-66, and 67-70; these read TTGFDWC, TGAC, and TTSC.

Post-translationally, contains LL-lanthionine and DL-beta-methyllanthionine, when coepressed in E.coli with the flavecin synthetase FlvM2.

The protein localises to the secreted. Its function is as follows. Lanthionine-containing peptide antibiotic (lantibiotic) that is probably active on Gram-positive bacteria, since its analog [Del1]Flvbeta.e shows antibacterial activity against Gram-positive bacteria. This activity is not synergistically enhanced by [Del2]Flvalpha.a, an analog of Flvalpha.a, which is encoded by the same operon than Flvbeta.e. The bactericidal activity of lantibiotics is based on depolarization of energized bacterial cytoplasmic membranes, initiated by the formation of aqueous transmembrane pores. The protein is Lantibiotic Flvbeta.e of Ruminococcus flavefaciens.